We begin with the raw amino-acid sequence, 414 residues long: Protein phosphatase 2C homolog 3 (414 aa).

The 266-residue stretch at 23-288 (LYGLSSMQGW…DNMTVCIVAL (266 aa)) folds into the PPM-type phosphatase domain. Positions 62, 63, 230, and 279 each coordinate Mn(2+). Disordered stretches follow at residues 313–368 (APPE…TNGS) and 380–414 (FPHKAEEENSSSETDIVNSNKDVADDHKEAVSAAD). Basic and acidic residues predominate over residues 350–363 (GYDKDANENSKEDD). Over residues 390–400 (SSETDIVNSNK) the composition is skewed to polar residues. A compositionally biased stretch (basic and acidic residues) spans 401 to 414 (DVADDHKEAVSAAD).

This sequence belongs to the PP2C family. Monomer. The cofactor is Mg(2+). Mn(2+) serves as cofactor.

It is found in the cytoplasm. The protein resides in the nucleus. The enzyme catalyses O-phospho-L-seryl-[protein] + H2O = L-seryl-[protein] + phosphate. The catalysed reaction is O-phospho-L-threonyl-[protein] + H2O = L-threonyl-[protein] + phosphate. Dephosphorylating regulator for many key proteins. Has an important role in osmotic stability and cell shape control. It may negatively regulate the osmosensing signal transmitted through wis1 map kinase. The chain is Protein phosphatase 2C homolog 3 (ptc3) from Schizosaccharomyces pombe (strain 972 / ATCC 24843) (Fission yeast).